Reading from the N-terminus, the 332-residue chain is Probable farnesyl diphosphate synthase (332 aa).

The isopentenyl diphosphate site is built by K75, R78, and H107. Mg(2+)-binding residues include D114 and D120. R125 is a binding site for (2E)-geranyl diphosphate. Residue R126 coordinates isopentenyl diphosphate. Residues K208, S209, Q250, and K267 each coordinate (2E)-geranyl diphosphate.

The protein belongs to the FPP/GGPP synthase family. Requires Mg(2+) as cofactor.

It localises to the cytoplasm. It carries out the reaction isopentenyl diphosphate + (2E)-geranyl diphosphate = (2E,6E)-farnesyl diphosphate + diphosphate. This chain is Probable farnesyl diphosphate synthase (fppS), found in Bradyrhizobium diazoefficiens (strain JCM 10833 / BCRC 13528 / IAM 13628 / NBRC 14792 / USDA 110).